The following is a 483-amino-acid chain: Salicylaldehyde dehydrogenase (483 aa).

228–233 is an NAD(+) binding site; that stretch reads GSTRVG. Active-site residues include Glu250 and Cys284.

The protein belongs to the aldehyde dehydrogenase family.

It carries out the reaction salicylaldehyde + NAD(+) + H2O = salicylate + NADH + 2 H(+). Its pathway is aromatic compound metabolism; naphthalene degradation. The protein is Salicylaldehyde dehydrogenase (nahF) of Pseudomonas putida (Arthrobacter siderocapsulatus).